The primary structure comprises 271 residues: Phosphonoacetaldehyde hydrolase (271 aa).

Residue D12 is the Nucleophile of the active site. Residues D12 and A14 each coordinate Mg(2+). K54 functions as the Schiff-base intermediate with substrate in the catalytic mechanism. Residue D188 participates in Mg(2+) binding.

This sequence belongs to the HAD-like hydrolase superfamily. PhnX family. Homodimer. Mg(2+) is required as a cofactor.

The catalysed reaction is phosphonoacetaldehyde + H2O = acetaldehyde + phosphate + H(+). In terms of biological role, involved in phosphonate degradation. The sequence is that of Phosphonoacetaldehyde hydrolase from Vibrio campbellii (strain ATCC BAA-1116).